Reading from the N-terminus, the 271-residue chain is Pyrroline-5-carboxylate reductase (271 aa).

The protein belongs to the pyrroline-5-carboxylate reductase family.

It localises to the cytoplasm. The catalysed reaction is L-proline + NADP(+) = (S)-1-pyrroline-5-carboxylate + NADPH + 2 H(+). It catalyses the reaction L-proline + NAD(+) = (S)-1-pyrroline-5-carboxylate + NADH + 2 H(+). The protein operates within amino-acid biosynthesis; L-proline biosynthesis; L-proline from L-glutamate 5-semialdehyde: step 1/1. In terms of biological role, catalyzes the reduction of 1-pyrroline-5-carboxylate (PCA) to L-proline. The sequence is that of Pyrroline-5-carboxylate reductase from Staphylococcus aureus (strain Mu50 / ATCC 700699).